Reading from the N-terminus, the 272-residue chain is Oligodendrocyte transcription factor 3 (272 aa).

Residues 1–14 (MNSDSSSVSSRASS) are compositionally biased toward low complexity. Residues 1 to 71 (MNSDSSSVSS…KAAGESSKYK (71 aa)) form a disordered region. Positions 24–33 (DHHHRHHHHQ) are enriched in basic residues. Polar residues predominate over residues 36 to 46 (RLNSVSSTQGD). The stretch at 68–89 (SKYKIKKQLSEQDLQQLRLKIN) forms a coiled coil. The bHLH domain occupies 83-137 (QLRLKINGRERKRMHDLNLAMDGLREVMPYAHGPSVRKLSKIATLLLARNYILML).

The protein resides in the nucleus. In terms of biological role, may determine the distinct specification program of class A neurons in the dorsal part of the spinal cord and suppress specification of class B neurons. This Homo sapiens (Human) protein is Oligodendrocyte transcription factor 3 (OLIG3).